The primary structure comprises 107 residues: Serine-rich and transmembrane domain-containing protein 1 (107 aa).

The helical transmembrane segment at 43–63 (IYVSIFLSLLAFLLLLLIIAL) threads the bilayer.

The protein localises to the membrane. This is Serine-rich and transmembrane domain-containing protein 1 (Sertm1) from Mus musculus (Mouse).